A 647-amino-acid polypeptide reads, in one-letter code: UvrABC system protein C (647 aa).

The 80-residue stretch at 16-95 (VEPGVYRFRD…IKEFDPRFNI (80 aa)) folds into the GIY-YIG domain. In terms of domain architecture, UVR spans 208-243 (DRYARDLERKMSAAAEQLDFERAARLRDDLFALKRA).

Belongs to the UvrC family. As to quaternary structure, interacts with UvrB in an incision complex.

It is found in the cytoplasm. The UvrABC repair system catalyzes the recognition and processing of DNA lesions. UvrC both incises the 5' and 3' sides of the lesion. The N-terminal half is responsible for the 3' incision and the C-terminal half is responsible for the 5' incision. The chain is UvrABC system protein C from Mycobacterium leprae (strain Br4923).